We begin with the raw amino-acid sequence, 198 residues long: ATP-dependent Clp protease proteolytic subunit (198 aa).

Serine 98 acts as the Nucleophile in catalysis. Histidine 123 is an active-site residue.

This sequence belongs to the peptidase S14 family. As to quaternary structure, fourteen ClpP subunits assemble into 2 heptameric rings which stack back to back to give a disk-like structure with a central cavity, resembling the structure of eukaryotic proteasomes.

The protein localises to the cytoplasm. It catalyses the reaction Hydrolysis of proteins to small peptides in the presence of ATP and magnesium. alpha-casein is the usual test substrate. In the absence of ATP, only oligopeptides shorter than five residues are hydrolyzed (such as succinyl-Leu-Tyr-|-NHMec, and Leu-Tyr-Leu-|-Tyr-Trp, in which cleavage of the -Tyr-|-Leu- and -Tyr-|-Trp bonds also occurs).. In terms of biological role, cleaves peptides in various proteins in a process that requires ATP hydrolysis. Has a chymotrypsin-like activity. Plays a major role in the degradation of misfolded proteins. This chain is ATP-dependent Clp protease proteolytic subunit, found in Halothermothrix orenii (strain H 168 / OCM 544 / DSM 9562).